A 110-amino-acid polypeptide reads, in one-letter code: Putative anti-sigma factor antagonist TM_1442 (110 aa).

Residues 4–110 form the STAS domain; sequence LKLDIVEQDD…FKITDTVEEA (107 aa). Residue Ser-59 is modified to Phosphoserine.

This sequence belongs to the anti-sigma-factor antagonist family. In terms of processing, phosphorylated on a serine residue.

In the phosphorylated form it could act as an anti-anti-sigma factor that counteracts an anti-sigma factor and thus releases a sigma factor from inhibition. This chain is Putative anti-sigma factor antagonist TM_1442, found in Thermotoga maritima (strain ATCC 43589 / DSM 3109 / JCM 10099 / NBRC 100826 / MSB8).